Here is a 1027-residue protein sequence, read N- to C-terminus: Circadian locomoter output cycles protein kaput (1027 aa).

One can recognise a bHLH domain in the interval 15 to 65 (LCRKSRNLSEKKRRDQFNSLVNDLSALISTSSRKMDKSTVLKSTIAFLKNH). PAS domains lie at 88–160 (NDEY…VIEP) and 255–321 (REMS…ELRQ). Disordered regions lie at residues 377–402 (RKEGQKSGNSNSITNNGSSKVIASTG), 443–575 (TSPA…QQLQ), 765–800 (QQMMMQQQQNLHTQHQHNLQQQHQSHSQLQQHTQQQ), 869–911 (TINP…NNED), and 926–1027 (SINF…GSSQ). The span at 383–402 (SGNSNSITNNGSSKVIASTG) shows a compositional bias: low complexity. Polar residues predominate over residues 443-486 (TSPAVDSSPMWSASAVQPSGSCQINPLKTSRPASSYGNISSTGI). 2 stretches are compositionally biased toward low complexity: residues 504-516 (SDSTSMSTDSVTS) and 552-575 (QQQQQHQNQQQQHQQHQQLQQQLQ). Positions 780–1027 (QHNLQQQHQS…SPHTAPGSSQ (248 aa)) are implicated in the circadian rhythmicity. Low complexity-rich tracts occupy residues 871–909 (NPFNSSSNNNNQSYNGGSNLNNGNQNNNNRSSNPPQNNN) and 951–995 (SGSN…NQNQ). Positions 1006 to 1027 (QMSQEQSQNLFNSPHTAPGSSQ) are enriched in polar residues.

Efficient DNA binding requires dimerization with another bHLH protein. Forms a heterodimer with Cycle. As to expression, widely expressed. Found in head, body, and appendage fractions.

The protein localises to the nucleus. In terms of biological role, circadian regulator that acts as a transcription factor and generates a rhythmic output with a period of about 24 hours. Oscillates in antiphase to the cycling observed for period (PER) and timeless (TIM). According to PubMed:9742131, reaches peak abundance within several hours of the dark-light transition at ZT0 (zeitgeber 0), whereas PubMed:9616122 describes bimodal oscillating expression with maximum at ZT5 and ZT23. Clock-cycle heterodimers activate cycling transcription of PER and TIM by binding to the E-box (5'-CACGTG-3') present in their promoters. Once induced, Period and Timeless block Clock's ability to transactivate their promoters. This is Circadian locomoter output cycles protein kaput (Clk) from Drosophila melanogaster (Fruit fly).